The primary structure comprises 145 residues: Class I hydrophobin rodE (145 aa).

4 disulfides stabilise this stretch: C43-C126, C59-C120, C60-C95, and C127-C140.

Belongs to the fungal hydrophobin family. As to quaternary structure, self-assembles to form functional amyloid fibrils called rodlets. Self-assembly into fibrillar rodlets occurs spontaneously at hydrophobic:hydrophilic interfaces and the rodlets further associate laterally to form amphipathic monolayers.

Functionally, aerial growth, conidiation, and dispersal of filamentous fungi in the environment rely upon a capability of their secreting small amphipathic proteins called hydrophobins (HPBs) with low sequence identity. Class I can self-assemble into an outermost layer of rodlet bundles on aerial cell surfaces, conferring cellular hydrophobicity that supports fungal growth, development and dispersal; whereas Class II form highly ordered films at water-air interfaces through intermolecular interactions but contribute nothing to the rodlet structure. RodE is a class I hydrophobin that, unlike rodA, is not required for rodlet formation. The protein is Class I hydrophobin rodE of Aspergillus fumigatus (strain ATCC MYA-4609 / CBS 101355 / FGSC A1100 / Af293) (Neosartorya fumigata).